A 346-amino-acid chain; its full sequence is Dehydrogenase azaJ (346 aa).

43-48 (VDYATQ) contributes to the NADP(+) binding site. A substrate-binding site is contributed by 133 to 140 (LAFSTAIV). NADP(+) contacts are provided by residues 170-173 (ATSV), 193-196 (SPHN), Tyr-211, and 251-252 (LN). 269 to 273 (APPNV) provides a ligand contact to substrate. 336–337 (VS) serves as a coordination point for NADP(+).

Belongs to the zinc-containing alcohol dehydrogenase family.

The protein operates within secondary metabolite biosynthesis. Dehydrogenase; part of the gene cluster that mediates the biosynthesis of azaphilones, a class of fungal metabolites characterized by a highly oxygenated pyrano-quinone bicyclic core and exhibiting a broad range of bioactivities. In the first step, the non-reducing polyketide synthase azaA forms the hexaketide precursor from successive condensations of five malonyl-CoA units, presumably with a simple acetyl-CoA starter unit. The reactive polyketide chain then undergoes a PT-mediated C2-C7 cyclization to afford the aromatic ring and is eventually released as an aldehyde through the R-domain. The putative ketoreductase azaE is proposed to catalyze the reduction of the terminal ketone resulting in the early culture product FK17-P2a. The monooxygenase azaH was demonstrated to be the only enzyme required to convert FK17-P2a to azanigerone E. AzaH first hydroxylates the benzaldehyde intermediate FK17-P2a at C4, which triggers the formation of the pyran-ring to afford azanigerone E. In parallel, the 2,4-dimethylhexanoyl chain is synthesized by the HR-PKS azaB and is proposed to be transferred to the C4-hydroxyl of azanigerone E by the acyltransferase azaD directly from the ACP domain of azaB. Alternatively, the 2,4-dimethyl-hexanoyl chain may be offloaded from the HR-PKS as a carboxylic acid and converted to an acyl-CoA by azaF. The resulting acyl-CoA molecule could then be taken up as a substrate by AzaD to form azanigerone B. To yield the carboxylic acid substituent in azanigerone A, the hydroxypropyl side chain of azanigerone B would need to undergo a C-C oxidative cleavage catalyzed by cytochrome P450 AzaI. AzaI is proposed to act on a vicinal diol that leads to a C-C bond scission either through an alkoxyradical intermediate or a peroxy complex. In the biosynthesis of azanigerone A, azanigerone B first undergoes hydroxylation at C10, possibly catalyzed by one of the two FAD-dependent monooxygenases encoded in the cluster, azaG or azaL, resulting in the vicinal diol azanigerone C. Oxidative cleavage of azanigerone C by azaI would yield the corresponding aldehyde derivative of azanigerone A. Finally, the dehydrogenase azaJ is proposed to convert the aldehyde functional group into the carboxylic acid, completing the conversion from azanigerone B to azanigerone A. Alternatively, the oxidation of aldehyde to carboxylic acid may be catalyzed by the same P450 enzyme azaI via consecutive oxidation or by endogenous alcohol dehydrogenase. The protein is Dehydrogenase azaJ of Aspergillus niger (strain ATCC 1015 / CBS 113.46 / FGSC A1144 / LSHB Ac4 / NCTC 3858a / NRRL 328 / USDA 3528.7).